A 565-amino-acid chain; its full sequence is Probable transcription factor lepB (565 aa).

The interval Lys52–Asp259 is fungal specific transcription factor domain.

It localises to the nucleus. Its function is as follows. Probable transcription factor; part of the gene cluster 23 that mediates the biosynthesis of a family of 2-pyridones known as leporins. The polypeptide is Probable transcription factor lepB (Aspergillus flavus (strain ATCC 200026 / FGSC A1120 / IAM 13836 / NRRL 3357 / JCM 12722 / SRRC 167)).